The sequence spans 281 residues: Pantothenate synthetase (281 aa).

30 to 37 (MGNLHQGH) serves as a coordination point for ATP. His37 (proton donor) is an active-site residue. A (R)-pantoate-binding site is contributed by Gln61. Gln61 contributes to the beta-alanine binding site. 149–152 (GRKD) is a binding site for ATP. Residue Gln155 participates in (R)-pantoate binding. ATP-binding positions include Ile178 and 186–189 (MSSR).

Belongs to the pantothenate synthetase family. Homodimer.

It is found in the cytoplasm. The enzyme catalyses (R)-pantoate + beta-alanine + ATP = (R)-pantothenate + AMP + diphosphate + H(+). It functions in the pathway cofactor biosynthesis; (R)-pantothenate biosynthesis; (R)-pantothenate from (R)-pantoate and beta-alanine: step 1/1. Functionally, catalyzes the condensation of pantoate with beta-alanine in an ATP-dependent reaction via a pantoyl-adenylate intermediate. This Shewanella denitrificans (strain OS217 / ATCC BAA-1090 / DSM 15013) protein is Pantothenate synthetase.